Consider the following 383-residue polypeptide: MYTFPEKGLSEDMVTDLLKEMRSRDCPYDRLLSTMCTRPHPVAVRAYSMFLETNLGDPGLFPGTAEIERRVVGILGSLLGCSDATGYVSTGGTESNIQAVRAARNSSGRRDGNIVVPRSAHFSFDKIADLLNLEVRKAELDESLRVDVGDVERLIDDRTVCLVGIAGTTEFGQVDPIGDLSELAIENGIPLHVDAAFGGFVLPFLEKDCMWDFRAEGVQSITIDPHKMGMSPIPAGGLIFRSSDPLRRLETETYYLTVSRQASLTGTRSGAAAAATYAVIMHLGIDGYRKVVRRCMDMTEHLVSEARAMGIEPVIEPVMNVVALRVDDPPGVRRALLERGWHVSMTREPKALRLILMPHMTDENLDLFLSDLEDVLISLRRGG.

Position 227 is an N6-(pyridoxal phosphate)lysine (lysine 227).

The protein belongs to the group II decarboxylase family. MfnA subfamily. Pyridoxal 5'-phosphate is required as a cofactor.

The enzyme catalyses L-tyrosine + H(+) = tyramine + CO2. It carries out the reaction L-aspartate + H(+) = beta-alanine + CO2. Its pathway is cofactor biosynthesis; methanofuran biosynthesis. The protein operates within cofactor biosynthesis; coenzyme A biosynthesis. In terms of biological role, catalyzes the decarboxylation of L-tyrosine to produce tyramine for methanofuran biosynthesis. Can also catalyze the decarboxylation of L-aspartate to produce beta-alanine for coenzyme A (CoA) biosynthesis. This chain is Probable L-tyrosine/L-aspartate decarboxylase, found in Methanothrix thermoacetophila (strain DSM 6194 / JCM 14653 / NBRC 101360 / PT) (Methanosaeta thermophila).